Here is a 290-residue protein sequence, read N- to C-terminus: 4-diphosphocytidyl-2-C-methyl-D-erythritol kinase (290 aa).

Residue Lys14 is part of the active site. Residue 103-113 (PMGGGLGGGSS) participates in ATP binding. Asp145 is an active-site residue.

The protein belongs to the GHMP kinase family. IspE subfamily. In terms of assembly, homodimer.

The catalysed reaction is 4-CDP-2-C-methyl-D-erythritol + ATP = 4-CDP-2-C-methyl-D-erythritol 2-phosphate + ADP + H(+). The protein operates within isoprenoid biosynthesis; isopentenyl diphosphate biosynthesis via DXP pathway; isopentenyl diphosphate from 1-deoxy-D-xylulose 5-phosphate: step 3/6. Functionally, catalyzes the phosphorylation of the position 2 hydroxy group of 4-diphosphocytidyl-2C-methyl-D-erythritol. The sequence is that of 4-diphosphocytidyl-2-C-methyl-D-erythritol kinase from Pectobacterium atrosepticum (strain SCRI 1043 / ATCC BAA-672) (Erwinia carotovora subsp. atroseptica).